The sequence spans 142 residues: Ribonuclease VapC44 (142 aa).

The 123-residue stretch at 4 to 126 folds into the PINc domain; sequence LLDVNVLLAL…GRFVTFDQSI (123 aa). Asp6 and Asp105 together coordinate Mg(2+).

It belongs to the PINc/VapC protein family. Mg(2+) serves as cofactor.

In terms of biological role, toxic component of a type II toxin-antitoxin (TA) system. An RNase. Its cognate antitoxin is VapB44. The protein is Ribonuclease VapC44 of Mycobacterium tuberculosis (strain CDC 1551 / Oshkosh).